A 336-amino-acid chain; its full sequence is Dihydroorotate dehydrogenase (quinone) (336 aa).

FMN-binding positions include 62–66 (AGLDK) and T86. Position 66 (K66) interacts with substrate. Substrate is bound at residue 111-115 (NRMGF). FMN is bound by residues N139 and N172. N172 is a binding site for substrate. The Nucleophile role is filled by S175. N177 provides a ligand contact to substrate. K217 and T245 together coordinate FMN. Substrate is bound at residue 246-247 (NT). FMN-binding positions include G268, G297, and 318–319 (YS).

Belongs to the dihydroorotate dehydrogenase family. Type 2 subfamily. Monomer. It depends on FMN as a cofactor.

It is found in the cell membrane. The catalysed reaction is (S)-dihydroorotate + a quinone = orotate + a quinol. Its pathway is pyrimidine metabolism; UMP biosynthesis via de novo pathway; orotate from (S)-dihydroorotate (quinone route): step 1/1. In terms of biological role, catalyzes the conversion of dihydroorotate to orotate with quinone as electron acceptor. The chain is Dihydroorotate dehydrogenase (quinone) from Cronobacter sakazakii (strain ATCC BAA-894) (Enterobacter sakazakii).